Here is an 88-residue protein sequence, read N- to C-terminus: Cold-regulated protein BLT14 (88 aa).

This Hordeum vulgare (Barley) protein is Cold-regulated protein BLT14 (BLT14).